We begin with the raw amino-acid sequence, 196 residues long: Carnitine operon protein CaiE (196 aa).

The tract at residues 173–196 is disordered; sequence TQPLRQMEGNRPRLQGTTDVAPKR.

This sequence belongs to the transferase hexapeptide repeat family.

Its pathway is amine and polyamine metabolism; carnitine metabolism. Overproduction of CaiE stimulates the activity of CaiB and CaiD. This is Carnitine operon protein CaiE from Escherichia coli (strain SMS-3-5 / SECEC).